The following is a 102-amino-acid chain: Protein PDF (102 aa).

A signal peptide spans 1-24 (MARYTYLVALVLLAICCQWGYCGA). Alanine amide is present on A100.

It belongs to the arthropod PDH family. Predominantly expressed in adult head. Expressed at higher level in males than in females. In adult brain, it is specifically expressed in the ventral lateral neurons (LNvs) as well as in 2-4 tritocerebral cells and 4-6 abdominal cells.

The protein resides in the secreted. In terms of biological role, neuropeptide PDF is the main transmitter regulating circadian locomotor rhythms. Required to maintain behavioral rhythms under constant conditions by coordinating pacemaker interactions in the circadian system. Together with CCHa1, involved in regulating intensity and periodicity of daytime activity, possibly by modulating rhythmic expression of circadian protein PER/period in a subset of clock neurons, but not TIM/timeless. Acts on small and large ventral lateral neurons to control sleep and regulates the state transition from sleep to wake. This Drosophila melanogaster (Fruit fly) protein is Protein PDF (Pdf).